Consider the following 378-residue polypeptide: Cobalt-precorrin-5B C(1)-methyltransferase (378 aa).

It belongs to the CbiD family.

The catalysed reaction is Co-precorrin-5B + S-adenosyl-L-methionine = Co-precorrin-6A + S-adenosyl-L-homocysteine. Its pathway is cofactor biosynthesis; adenosylcobalamin biosynthesis; cob(II)yrinate a,c-diamide from sirohydrochlorin (anaerobic route): step 6/10. Its function is as follows. Catalyzes the methylation of C-1 in cobalt-precorrin-5B to form cobalt-precorrin-6A. The polypeptide is Cobalt-precorrin-5B C(1)-methyltransferase (Photorhabdus laumondii subsp. laumondii (strain DSM 15139 / CIP 105565 / TT01) (Photorhabdus luminescens subsp. laumondii)).